The following is a 183-amino-acid chain: UPF0316 protein BcerKBAB4_3093 (183 aa).

A run of 3 helical transmembrane segments spans residues 6–26 (LIFVLQIIYVPTLTIRTILLV), 32–52 (SAAGVGLLEGAIYIVSLGIVF), and 58–78 (WMNIVAYVIGFSAGLLLGGYI).

It belongs to the UPF0316 family.

It is found in the cell membrane. The protein is UPF0316 protein BcerKBAB4_3093 of Bacillus mycoides (strain KBAB4) (Bacillus weihenstephanensis).